Consider the following 346-residue polypeptide: MAEITAKLVKELREKSGAGVMDAKKALVETDGDIEKAIELLREKGMAKAAKKADRVAAEGLTGVYVNGNVAAVIEVNAETDFVAKNAQFVELVNTTAKVIAEGKPANNEEALALIMPSGETLEAAYVSATATIGEKISFRRFALIEKTDAQHFGAYQHNGGRIGVISVVEDGDEALAKQLSMHIAAMKPTVLSYKELDEQFVKDELAQLNHVIDQDNESRAMVNKPALPHLKYGSKAQLTDDVIAQAEADIKAELAAEGKPEKIWDKIIPGKMDRFMLDNTKVDQAYTLLAQVYIMDDSKTVEAYLESVNASVVEFARFEVGEGIEKAANDFEAEVAATMAAALNN.

The tract at residues 80-83 (TDFV) is involved in Mg(2+) ion dislocation from EF-Tu.

It belongs to the EF-Ts family.

It localises to the cytoplasm. In terms of biological role, associates with the EF-Tu.GDP complex and induces the exchange of GDP to GTP. It remains bound to the aminoacyl-tRNA.EF-Tu.GTP complex up to the GTP hydrolysis stage on the ribosome. The polypeptide is Elongation factor Ts (Streptococcus pneumoniae (strain 70585)).